We begin with the raw amino-acid sequence, 128 residues long: Fluoride-specific ion channel FluC (128 aa).

4 consecutive transmembrane segments (helical) span residues 5–25, 34–54, 67–87, and 99–119; these read LFISCGAILGASLRWAIGLLF, FGALIANLLGCLIIGVLLGLF, FLITGFLGSLTTFSSFSSEVV, and FCVLMMHLFGCLAMTVLGIWI. G74 and T77 together coordinate Na(+).

Belongs to the fluoride channel Fluc/FEX (TC 1.A.43) family.

The protein localises to the cell inner membrane. It carries out the reaction fluoride(in) = fluoride(out). With respect to regulation, na(+) is not transported, but it plays an essential structural role and its presence is essential for fluoride channel function. Its function is as follows. Fluoride-specific ion channel. Important for reducing fluoride concentration in the cell, thus reducing its toxicity. This chain is Fluoride-specific ion channel FluC, found in Haemophilus influenzae (strain PittEE).